We begin with the raw amino-acid sequence, 1939 residues long: Myosin-6 (1939 aa).

The Myosin N-terminal SH3-like domain occupies 32–81 (DIRTECFVPDDKEEFVKAKILSREGGKVIAETENGKTVTVKEDQVLQQNP). The Myosin motor domain maps to 85–780 (DKIEDMAMLT…LLGLLEEMRD (696 aa)). The residue at position 129 (K129) is an N6,N6,N6-trimethyllysine. ATP is bound at residue 178-185 (GESGAGKT). At T379 the chain carries Phosphothreonine. A Phosphoserine modification is found at S417. Actin-binding regions lie at residues 657 to 679 (LNKLMTNLRTTHPHFVRCIIPNE) and 759 to 773 (KFGHTKVFFKAGLLG). One can recognise an IQ domain in the interval 783–812 (LSRIITRMQAQARGQLMRIEFKKIVERRDA). Residues 842-1939 (LKSAETEKEM…GAKQKMHDEE (1098 aa)) are a coiled coil. At S1139 the chain carries Phosphoserine. Residue Y1261 is modified to Phosphotyrosine. Position 1271 is a phosphoserine (S1271). Residues T1277 and T1284 each carry the phosphothreonine modification. S1309 is modified (phosphoserine). The residue at position 1310 (Y1310) is a Phosphotyrosine. Phosphothreonine is present on T1311. At S1512 the chain carries Phosphoserine. Position 1515 is a phosphothreonine (T1515). 2 stretches are compositionally biased toward basic and acidic residues: residues 1826–1837 (GELEAEQKRNAE) and 1925–1939 (KSRDIGAKQKMHDEE). Disordered regions lie at residues 1826 to 1849 (GELEAEQKRNAESVKGMRKSERRI) and 1909 to 1939 (EERADIAESQVNKLRAKSRDIGAKQKMHDEE).

This sequence belongs to the TRAFAC class myosin-kinesin ATPase superfamily. Myosin family. Muscle myosin is a hexameric protein that consists of 2 heavy chain subunits (MHC), 2 alkali light chain subunits (MLC) and 2 regulatory light chain subunits (MLC-2).

The protein resides in the cytoplasm. The protein localises to the myofibril. Its function is as follows. Muscle contraction. The sequence is that of Myosin-6 (MYH6) from Homo sapiens (Human).